An 843-amino-acid polypeptide reads, in one-letter code: MTEQNGQENESNKTLALNLSGRPDVAGALKAGVRVIPVEIEDQMKEAYLDYAMSVIVGRALPDVRDGLKPVHRRVLHAMNERAWRSDRPYVKSAKIVGEVIGNYHPHGDSAVYETMVRMAQTFSMRETLIDGQGNFGSVDGDNAAAYRYTEARLTKLAEELLKDIEKNTVSFSPNFDDTRQQPDVLPANFPNILVNGSTGIAVGMATNIPPHNLKEAVNAVIALIQNPDITLPELMKILPGPDFPTGGTIIGGEGLYQAYATGKGSIRIRSKVDIIENNKGREIIVIHEIPYQVNKKNMLEKIGDLVNEKIIEGISEILDLSDRKGIRVEIHVKKDANAQVILNQLFKLTQLQVSYGITMLAILDNRPKIFSLKEILKSYAEHRREVVVKRTEFDLDKAQKRAHILEGLRIALENIDEVIRIIRASKDVREAQSSLMATFSLSELQADAILEMRLQRLTSLEVQKIIDELEQVRILIADLEDILSKPDRVKSIICDELGKVSQSFGNTRTTEISLESLESSTFNAEDLIADEEVVVQLSEDMFIKRLPMDTFRRQKRGGKGVQGISTKREDFVKKLSSAMTHDNLMLFSNKGRAFLLKVYELPIATKEARGKSLKAVINLNDDEIITSLFTFRNFDESYLLMVTREGFVKKIQLDEFTNTKKSGIIAIGLRDGDELIDVIANPNNYDVFIGSKNGLAIRMNLNELRSQGRTASGVTAMKLEDDDSIAGITKVEPNTNLFCISENGFGKRTDFEEFSTKGRGGKGMTYLKIGEKNGRAVGISSVKEEDELLVITQSGMAIRVEVKTISMVGRSAMGVKVVNTKDEDFVKDFAVVRESDSDSAES.

In terms of domain architecture, Topo IIA-type catalytic spans 61–528; the sequence is LPDVRDGLKP…ESSTFNAEDL (468 aa). Tyrosine 149 acts as the O-(5'-phospho-DNA)-tyrosine intermediate in catalysis. Residues 555–561 carry the GyrA-box motif; the sequence is QKRGGKG.

This sequence belongs to the type II topoisomerase GyrA/ParC subunit family. Heterotetramer, composed of two GyrA and two GyrB chains. In the heterotetramer, GyrA contains the active site tyrosine that forms a transient covalent intermediate with DNA, while GyrB binds cofactors and catalyzes ATP hydrolysis.

The protein resides in the cytoplasm. It catalyses the reaction ATP-dependent breakage, passage and rejoining of double-stranded DNA.. Its function is as follows. A type II topoisomerase that negatively supercoils closed circular double-stranded (ds) DNA in an ATP-dependent manner to modulate DNA topology and maintain chromosomes in an underwound state. Negative supercoiling favors strand separation, and DNA replication, transcription, recombination and repair, all of which involve strand separation. Also able to catalyze the interconversion of other topological isomers of dsDNA rings, including catenanes and knotted rings. Type II topoisomerases break and join 2 DNA strands simultaneously in an ATP-dependent manner. This Leptospira biflexa serovar Patoc (strain Patoc 1 / Ames) protein is DNA gyrase subunit A.